The following is a 370-amino-acid chain: Peptide chain release factor 1 (370 aa).

Glutamine 239 carries the post-translational modification N5-methylglutamine.

This sequence belongs to the prokaryotic/mitochondrial release factor family. Post-translationally, methylated by PrmC. Methylation increases the termination efficiency of RF1.

The protein resides in the cytoplasm. Functionally, peptide chain release factor 1 directs the termination of translation in response to the peptide chain termination codons UAG and UAA. This Bacteroides thetaiotaomicron (strain ATCC 29148 / DSM 2079 / JCM 5827 / CCUG 10774 / NCTC 10582 / VPI-5482 / E50) protein is Peptide chain release factor 1.